The primary structure comprises 288 residues: Probable aquaporin PIP2-2 (288 aa).

Residues 1–21 are disordered; it reads MAKDIEASAPEGGEFSAKDYT. The next 2 membrane-spanning stretches (helical) occupy residues 42-62 and 81-101; these read AVIA…ATVI and GVGI…LVYC. An NPA 1 motif is present at residues 111–113; it reads NPA. Transmembrane regions (helical) follow at residues 130–150, 172–192, and 204–224; these read VLYI…VKGF, GTGL…VFSA, and IPVL…LATI. An NPA 2 motif is present at residues 232 to 234; the sequence is NPA. A helical transmembrane segment spans residues 254–274; it reads IFWVGPLIGAAIAAAYHQYVL.

This sequence belongs to the MIP/aquaporin (TC 1.A.8) family. PIP (TC 1.A.8.11) subfamily. As to expression, expressed in roots, leaves and anthers.

Its subcellular location is the cell membrane. In terms of biological role, aquaporins facilitate the transport of water and small neutral solutes across cell membranes. In Oryza sativa subsp. japonica (Rice), this protein is Probable aquaporin PIP2-2 (PIP2-2).